Reading from the N-terminus, the 806-residue chain is Leucine--tRNA ligase (806 aa).

The 'HIGH' region signature appears at 38–48 (PYPSGEIHMGH). The 'KMSKS' region signature appears at 572–576 (KMSKS). Lysine 575 is a binding site for ATP.

Belongs to the class-I aminoacyl-tRNA synthetase family.

The protein resides in the cytoplasm. It catalyses the reaction tRNA(Leu) + L-leucine + ATP = L-leucyl-tRNA(Leu) + AMP + diphosphate. The chain is Leucine--tRNA ligase from Helicobacter pylori (strain ATCC 700392 / 26695) (Campylobacter pylori).